The primary structure comprises 168 residues: Shikimate kinase (168 aa).

12-17 (GAGKST) is an ATP binding site. Ser-16 contacts Mg(2+). Residues Asp-34, Arg-58, and Gly-80 each contribute to the substrate site. Arg-117 contacts ATP. Residue Arg-136 participates in substrate binding. Arg-153 contributes to the ATP binding site.

This sequence belongs to the shikimate kinase family. As to quaternary structure, monomer. Requires Mg(2+) as cofactor.

It localises to the cytoplasm. The catalysed reaction is shikimate + ATP = 3-phosphoshikimate + ADP + H(+). Its pathway is metabolic intermediate biosynthesis; chorismate biosynthesis; chorismate from D-erythrose 4-phosphate and phosphoenolpyruvate: step 5/7. Functionally, catalyzes the specific phosphorylation of the 3-hydroxyl group of shikimic acid using ATP as a cosubstrate. The sequence is that of Shikimate kinase from Rhodococcus jostii (strain RHA1).